We begin with the raw amino-acid sequence, 359 residues long: Membrane-bound lytic murein transglycosylase C (359 aa).

An N-terminal signal peptide occupies residues 1–16 (MKKYLALALIAPLLIS). Cysteine 17 is lipidated: N-palmitoyl cysteine. A lipid anchor (S-diacylglycerol cysteine) is attached at cysteine 17.

It belongs to the transglycosylase Slt family.

Its subcellular location is the cell outer membrane. It carries out the reaction Exolytic cleavage of the (1-&gt;4)-beta-glycosidic linkage between N-acetylmuramic acid (MurNAc) and N-acetylglucosamine (GlcNAc) residues in peptidoglycan, from either the reducing or the non-reducing ends of the peptidoglycan chains, with concomitant formation of a 1,6-anhydrobond in the MurNAc residue.. Its function is as follows. Murein-degrading enzyme. May play a role in recycling of muropeptides during cell elongation and/or cell division. The sequence is that of Membrane-bound lytic murein transglycosylase C from Escherichia coli (strain SMS-3-5 / SECEC).